The chain runs to 172 residues: Urease accessory protein UreE (172 aa).

Belongs to the UreE family.

Its subcellular location is the cytoplasm. Involved in urease metallocenter assembly. Binds nickel. Probably functions as a nickel donor during metallocenter assembly. This chain is Urease accessory protein UreE, found in Shewanella halifaxensis (strain HAW-EB4).